The chain runs to 78 residues: Large ribosomal subunit protein uL24 (78 aa).

It belongs to the universal ribosomal protein uL24 family. Part of the 50S ribosomal subunit.

Functionally, one of two assembly initiator proteins, it binds directly to the 5'-end of the 23S rRNA, where it nucleates assembly of the 50S subunit. Its function is as follows. One of the proteins that surrounds the polypeptide exit tunnel on the outside of the subunit. The polypeptide is Large ribosomal subunit protein uL24 (Helicobacter hepaticus (strain ATCC 51449 / 3B1)).